The following is a 192-amino-acid chain: Protein GrpE (192 aa).

The tract at residues 1-41 is disordered; sequence MSKEEFPHEKDLKDEVTPDKAPKKDPKAAPKEEVKENPVEN.

Belongs to the GrpE family. As to quaternary structure, homodimer.

It localises to the cytoplasm. Functionally, participates actively in the response to hyperosmotic and heat shock by preventing the aggregation of stress-denatured proteins, in association with DnaK and GrpE. It is the nucleotide exchange factor for DnaK and may function as a thermosensor. Unfolded proteins bind initially to DnaJ; upon interaction with the DnaJ-bound protein, DnaK hydrolyzes its bound ATP, resulting in the formation of a stable complex. GrpE releases ADP from DnaK; ATP binding to DnaK triggers the release of the substrate protein, thus completing the reaction cycle. Several rounds of ATP-dependent interactions between DnaJ, DnaK and GrpE are required for fully efficient folding. The polypeptide is Protein GrpE (Lactobacillus johnsonii (strain CNCM I-12250 / La1 / NCC 533)).